Consider the following 1386-residue polypeptide: YLP motif-containing protein 1 (1386 aa).

Disordered stretches follow at residues 1–336 (MYPN…EDAR) and 517–1068 (TSIP…PPGR). The segment covering 14 to 27 (YPPPPVPPPPPPVA) has biased composition (pro residues). 2 stretches are compositionally biased toward low complexity: residues 31–50 (ASPG…SSSG) and 59–80 (LAQL…LQPH). Pro residues-rich tracts occupy residues 81 to 93 (HLPP…PPVM), 102 to 114 (QPPP…PPGP), 148 to 158 (PESPPVPPGSY), 166 to 176 (MPPPQPPPSYY), and 184 to 203 (YLPP…PPSI). The segment covering 237-259 (STMTPQEQQQYWYRQHLLSLQQR) has biased composition (polar residues). The segment covering 260 to 270 (TKVHLPGHKKG) has biased composition (basic residues). Over residues 276 to 285 (DVPEPIKEEA) the composition is skewed to basic and acidic residues. Over residues 302–317 (PPLPPPNEEAPPPLSP) the composition is skewed to pro residues. The span at 320 to 333 (PQSEDSEDSEDSEE) shows a compositional bias: acidic residues. 3 stretches are compositionally biased toward pro residues: residues 517–558 (TSIP…PPPA), 566–603 (PVLP…PQGM), and 641–650 (PPSPYHPPPQ). Positions 651–667 (SEQVNSKPLNKVFSSEQ) are enriched in polar residues. K683 is subject to N6-methyllysine. Basic and acidic residues predominate over residues 706–722 (RGPREQKEQLQKLKDFG). A compositionally biased stretch (pro residues) spans 746 to 761 (MYPPPGSYRPPPPMGK). Over residues 762 to 779 (PPGSIVRPSAPPARSSIP) the composition is skewed to low complexity. Pro residues-rich tracts occupy residues 781–803 (TRPP…PPPV) and 848–878 (PVLP…PPPV). K894 participates in a covalent cross-link: Glycyl lysine isopeptide (Lys-Gly) (interchain with G-Cter in SUMO2). Composition is skewed to basic and acidic residues over residues 904–938 (ITLR…EPYF), 945–1014 (TDHR…DRPP), 1023–1033 (GERRTYPEERM), and 1049–1068 (RVEK…PPGR). K951 participates in a covalent cross-link: Glycyl lysine isopeptide (Lys-Gly) (interchain with G-Cter in SUMO2). An involved in interaction with PPP1CA region spans residues 1336-1343 (KKRVRWAD).

As to quaternary structure, interacts with PPP1CA and NCOA5. Forms a complex with ILF2, ILF3, KHDRBS1, RBMX, NCOA5 and PPP1CA.

The protein resides in the nucleus. Its subcellular location is the nucleus speckle. Plays a role in the reduction of telomerase activity during differentiation of embryonic stem cells by binding to the core promoter of TERT and controlling its down-regulation. This is YLP motif-containing protein 1 (Ylpm1) from Mus musculus (Mouse).